The primary structure comprises 880 residues: Tyrosine-protein kinase receptor TYRO3 (880 aa).

A signal peptide spans 1-30; sequence MALRRSMGWPGLRPLLLAGLASLLLPGSAA. Ig-like C2-type domains follow at residues 31-118 and 129-209; these read AGLK…TKIS and PFFT…PAIV. Residues 31-419 are Extracellular-facing; sequence AGLKLMGAPV…QGPPHSRTSW (389 aa). N-linked (GlcNAc...) asparagine glycans are attached at residues asparagine 53, asparagine 75, asparagine 181, asparagine 220, asparagine 230, asparagine 283, asparagine 356, and asparagine 370. 2 cysteine pairs are disulfide-bonded: cysteine 54-cysteine 107 and cysteine 150-cysteine 193. 2 Fibronectin type-III domains span residues 217 to 310 and 315 to 406; these read APFN…TKGL and APQN…SHDH. The helical transmembrane segment at 420–440 threads the bilayer; sequence VPVVLGVLTALITAAALALIL. The Cytoplasmic segment spans residues 441–880; the sequence is LRKRRKETRF…QQGLLPHSSC (440 aa). The residue at position 456 (serine 456) is a Phosphoserine. The 278-residue stretch at 508 to 785 folds into the Protein kinase domain; that stretch reads FTLGRMLGKG…LENILGHLSV (278 aa). Residues 514–522 and lysine 540 each bind ATP; that span reads LGKGEFGSV. Aspartate 645 serves as the catalytic Proton acceptor. Tyrosine 671, tyrosine 675, tyrosine 676, and tyrosine 794 each carry phosphotyrosine; by autocatalysis. A disordered region spans residues 800–864; that stretch reads AEQPTESGSP…QQPESPLNEN (65 aa). Residues serine 808 and serine 859 each carry the phosphoserine modification. Over residues 849–864 the composition is skewed to polar residues; sequence SPGQLEQQPESPLNEN.

It belongs to the protein kinase superfamily. Tyr protein kinase family. AXL/UFO subfamily. In terms of assembly, monomer and homodimer. Interacts (via N-terminus) with extracellular ligands TULP1 and GAS6. Interacts with PIK3R1; this interaction increases PI3-kinase activity. Autophosphorylated. In terms of tissue distribution, abundant in the brain and lower levels in other tissues.

The protein resides in the cell membrane. It catalyses the reaction L-tyrosyl-[protein] + ATP = O-phospho-L-tyrosyl-[protein] + ADP + H(+). Functionally, receptor tyrosine kinase that transduces signals from the extracellular matrix into the cytoplasm by binding to several ligands including TULP1 or GAS6. Regulates many physiological processes including cell survival, migration and differentiation. Ligand binding at the cell surface induces dimerization and autophosphorylation of TYRO3 on its intracellular domain that provides docking sites for downstream signaling molecules. Following activation by ligand, interacts with PIK3R1 and thereby enhances PI3-kinase activity. Activates the AKT survival pathway, including nuclear translocation of NF-kappa-B and up-regulation of transcription of NF-kappa-B-regulated genes. TYRO3 signaling plays a role in various processes such as neuron protection from excitotoxic injury, platelet aggregation and cytoskeleton reorganization. Also plays an important role in inhibition of Toll-like receptors (TLRs)-mediated innate immune response by activating STAT1, which selectively induces production of suppressors of cytokine signaling SOCS1 and SOCS3. In Mus musculus (Mouse), this protein is Tyrosine-protein kinase receptor TYRO3 (Tyro3).